Reading from the N-terminus, the 218-residue chain is Glutathione S-transferase (218 aa).

In terms of domain architecture, GST N-terminal spans 2-88; the sequence is PVTLGYWDIR…YIARKHDLCG (87 aa). Glutathione contacts are provided by residues 7-8, 46-50, 59-60, and 72-73; these read YW, WLNEK, NL, and QS. Positions 90–208 constitute a GST C-terminal domain; the sequence is TEEERIQLDI…KSSRFSCKQI (119 aa). Residue tyrosine 116 participates in substrate binding.

It belongs to the GST superfamily. Mu family. As to quaternary structure, homodimer.

It is found in the cytoplasm. The enzyme catalyses RX + glutathione = an S-substituted glutathione + a halide anion + H(+). Conjugation of reduced glutathione to a wide number of exogenous and endogenous hydrophobic electrophiles. This Mesocricetus auratus (Golden hamster) protein is Glutathione S-transferase.